The following is a 70-amino-acid chain: Movement protein TGBp3 (70 aa).

The Lumenal portion of the chain corresponds to 1–4; it reads MFPR. Residues 5–25 form a helical membrane-spanning segment; the sequence is SGLGLAVAAAVVAYLVLLLAQ. Residues 26–70 are Cytoplasmic-facing; the sequence is QLYMSNSSQCTIVITGESVSVVGCVYSEAFIELVKGLKPYYHPLG.

The protein belongs to the Tymovirales TGBp3 protein family.

The protein localises to the host endoplasmic reticulum membrane. Its function is as follows. Plays a role in viral cell-to-cell propagation, by facilitating genome transport to neighboring plant cells through plasmosdesmata. May induce the formation of granular vesicles derived from the Endoplasmic reticulum, which align on actin filaments. The protein is Movement protein TGBp3 of Crataegus (hawthorn).